Reading from the N-terminus, the 286-residue chain is Glucose import system permease protein GlcT (286 aa).

The next 6 membrane-spanning stretches (helical) occupy residues 6-26 (TIILVAPTAIFSAILLYLVIW), 71-91 (VILVVIGNILGIFIAALLYFL), 103-123 (IVIYPLSISMAVNGLIWLWLF), 154-174 (LVLVSVWAYTGIAALFYLAGF), 199-219 (ILIPNSLNSFIIATALLFLFS), and 260-280 (VATMITLIATIIIIPYALTVI). The region spanning 63–275 (LLHSIELSVI…LIATIIIIPY (213 aa)) is the ABC transmembrane type-1 domain.

The protein belongs to the binding-protein-dependent transport system permease family. The complex is composed of two ATP-binding proteins (GlcV), two transmembrane proteins (GlcT and GlcU) and a solute-binding protein (GlcS).

The protein localises to the cell membrane. In terms of biological role, part of the ABC transporter complex GlcSTUV involved in glucose uptake. Responsible for the translocation of the substrate across the membrane. This chain is Glucose import system permease protein GlcT, found in Saccharolobus solfataricus (strain ATCC 35092 / DSM 1617 / JCM 11322 / P2) (Sulfolobus solfataricus).